The chain runs to 161 residues: Protein-lysine N-methyltransferase (161 aa).

A DxGxGxG SAM-binding motif motif is present at residues 34–40 (DLGCGDG).

It belongs to the class I-like SAM-binding methyltransferase superfamily. As to quaternary structure, monomer.

It carries out the reaction L-lysyl-[protein] + S-adenosyl-L-methionine = N(6)-methyl-L-lysyl-[protein] + S-adenosyl-L-homocysteine + H(+). Its function is as follows. Catalyzes the methylation of lysine residues in target proteins, using S-adenosyl-L-methionine (SAM) as the methyl donor. Exhibits broad substrate specificity, being able to methylate the crenarchaeal chromatin protein Cren7 primarily at 'Lys-11', 'Lys-16' and 'Lys-31', as well as a number of recombinant Sulfolobus proteins in vitro. Methylates lysine residues in a rather sequence-independent manner. The polypeptide is Protein-lysine N-methyltransferase (Saccharolobus islandicus (strain REY15A) (Sulfolobus islandicus)).